Here is an 888-residue protein sequence, read N- to C-terminus: Alanine--tRNA ligase (888 aa).

Zn(2+) contacts are provided by H564, H568, C676, and H680.

This sequence belongs to the class-II aminoacyl-tRNA synthetase family. The cofactor is Zn(2+).

The protein resides in the cytoplasm. It carries out the reaction tRNA(Ala) + L-alanine + ATP = L-alanyl-tRNA(Ala) + AMP + diphosphate. In terms of biological role, catalyzes the attachment of alanine to tRNA(Ala) in a two-step reaction: alanine is first activated by ATP to form Ala-AMP and then transferred to the acceptor end of tRNA(Ala). Also edits incorrectly charged Ser-tRNA(Ala) and Gly-tRNA(Ala) via its editing domain. This is Alanine--tRNA ligase from Bartonella quintana (strain Toulouse) (Rochalimaea quintana).